The sequence spans 303 residues: Haloalkane dehalogenase (303 aa).

The AB hydrolase-1 domain maps to 48-192 (PVLLLHGEPS…GTVTKLSQAV (145 aa)). Catalysis depends on D123, which acts as the Nucleophile. The Proton donor role is filled by D250. H280 acts as the Proton acceptor in catalysis.

The protein belongs to the haloalkane dehalogenase family. Type 1 subfamily. In terms of assembly, monomer.

It carries out the reaction 1-haloalkane + H2O = a halide anion + a primary alcohol + H(+). Its function is as follows. Catalyzes hydrolytic cleavage of carbon-halogen bonds in halogenated aliphatic compounds, leading to the formation of the corresponding primary alcohols, halide ions and protons. The chain is Haloalkane dehalogenase from Psychrobacter cryohalolentis (strain ATCC BAA-1226 / DSM 17306 / VKM B-2378 / K5).